A 109-amino-acid polypeptide reads, in one-letter code: EPIDERMAL PATTERNING FACTOR-like protein 4 (109 aa).

Positions 1–26 (MGTFRRRRRFLLAALVTFALLHLFSA) are cleaved as a signal peptide. 3 cysteine pairs are disulfide-bonded: C66–C100, C70–C76, and C73–C102.

It belongs to the plant cysteine rich small secretory peptide family. Epidermal patterning factor subfamily. In terms of assembly, interacts with ERECTA. In terms of tissue distribution, expressed at the base of the apical meristem at 3 days after germination. Not detected in the hypocotyl. Expressed in developing stems soon after bolting, in inflorescence stems and in young siliques.

The protein localises to the secreted. Functionally, acts primarily as positive regulator of inflorescence growth. Endodermal expression is sufficient for proper inflorescence architecture. Redundantly involved with EPFL6 in procambial development regulation. Controls stomatal patterning. Mediates stomatal development inhibition. TMM (AC Q9SSD1) functions to dampen or block CLL2 signaling. Acts as a growth-regulatory ligand for ERECTA family receptors. The polypeptide is EPIDERMAL PATTERNING FACTOR-like protein 4 (Arabidopsis thaliana (Mouse-ear cress)).